A 463-amino-acid polypeptide reads, in one-letter code: Matrix remodeling-associated protein 8 (463 aa).

An N-terminal signal peptide occupies residues 1–19 (MELRAWVLLWRLVLLQSSA). The Extracellular portion of the chain corresponds to 20 to 362 (VLLSSGPSGP…PEGRAHFFQQ (343 aa)). 2 consecutive Ig-like V-type domains span residues 29 to 173 (PATS…LEVT) and 176 to 308 (PRAA…LRVT). 2 disulfide bridges follow: Cys-54–Cys-153 and Cys-202–Cys-288. Residue Asn-135 is glycosylated (N-linked (GlcNAc...) asparagine). Ser-244 carries the post-translational modification Phosphoserine. The RGD signature appears at 268 to 270 (RGD). The interval 309–341 (EPAARPPPPPRDSPGNGSSHSGAPGPGARDPTL) is disordered. Residues 321–335 (SPGNGSSHSGAPGPG) show a composition bias toward low complexity. A glycan (N-linked (GlcNAc...) asparagine) is linked at Asn-324. Residues 363–383 (LGYVLATLLLFILLLITVVLA) form a helical membrane-spanning segment. The Cytoplasmic segment spans residues 384 to 463 (TRQRRRGGYE…DKEFRKEYCK (80 aa)).

In terms of assembly, homodimer in cis. Does not appear to form trans-homodimers. Interacts with ITGB3; the interaction inhibits ITGAV:ITGB3 heterodimer formation.

It localises to the cell membrane. It is found in the cell junction. The protein resides in the tight junction. Its subcellular location is the cytoplasm. The protein localises to the cell projection. It localises to the cilium membrane. It is found in the nucleus. Transmembrane protein which can modulate activity of various signaling pathways, probably via binding to integrin ITGAV:ITGB3. Mediates heterophilic cell-cell interactions in vitro. Inhibits osteoclastogenesis downstream of TNFSF11/RANKL and CSF1, where it may function by attenuating signaling via integrin ITGB3 and MAP kinase p38. Plays a role in cartilage formation where it promotes proliferation and maturation of growth plate chondrocytes. Stimulates formation of primary cilia in chondrocytes. Enhances expression of genes involved in the hedgehog signaling pathway in chondrocytes, including the hedgehog signaling molecule IHH; may also promote signaling via the PTHLH/PTHrP pathway. Plays a role in angiogenesis where it suppresses migration of endothelial cells and also promotes their apoptosis. Inhibits VEGF-induced activation of AKT and p38 MAP kinase in endothelial cells. Also inhibits VTN (vitronectin)-mediated integrin ITGAV:ITGB3 signaling and activation of PTK2/FAK. May play a role in the maturation and maintenance of the blood-brain barrier. The sequence is that of Matrix remodeling-associated protein 8 (MXRA8) from Bos taurus (Bovine).